We begin with the raw amino-acid sequence, 400 residues long: Tryptophan synthase beta chain (400 aa).

An N6-(pyridoxal phosphate)lysine modification is found at lysine 91.

It belongs to the TrpB family. In terms of assembly, tetramer of two alpha and two beta chains. Requires pyridoxal 5'-phosphate as cofactor.

It catalyses the reaction (1S,2R)-1-C-(indol-3-yl)glycerol 3-phosphate + L-serine = D-glyceraldehyde 3-phosphate + L-tryptophan + H2O. Its pathway is amino-acid biosynthesis; L-tryptophan biosynthesis; L-tryptophan from chorismate: step 5/5. In terms of biological role, the beta subunit is responsible for the synthesis of L-tryptophan from indole and L-serine. The protein is Tryptophan synthase beta chain of Listeria monocytogenes serotype 4b (strain CLIP80459).